The following is an 89-amino-acid chain: Co-chaperonin GroES (89 aa).

The protein belongs to the GroES chaperonin family. As to quaternary structure, heptamer of 7 subunits arranged in a ring. Interacts with the chaperonin GroEL.

It localises to the cytoplasm. Together with the chaperonin GroEL, plays an essential role in assisting protein folding. The GroEL-GroES system forms a nano-cage that allows encapsulation of the non-native substrate proteins and provides a physical environment optimized to promote and accelerate protein folding. GroES binds to the apical surface of the GroEL ring, thereby capping the opening of the GroEL channel. This chain is Co-chaperonin GroES, found in Kosmotoga olearia (strain ATCC BAA-1733 / DSM 21960 / TBF 19.5.1).